A 152-amino-acid chain; its full sequence is Pleckstrin homology-like domain family A member 2 (152 aa).

2 positions are modified to phosphoserine: serine 3 and serine 42. A PH domain is found at 7-99; it reads VLREGELEKR…WNAAIALALI (93 aa). Positions 112–152 are disordered; that stretch reads SRQERTAPAAPAEDAVAAAAAAPSEPSEPSRPSPQPKPRTP. Over residues 118–138 the composition is skewed to low complexity; it reads APAAPAEDAVAAAAAAPSEPS. Pro residues predominate over residues 140-152; the sequence is PSRPSPQPKPRTP. Phosphoserine is present on residues serine 141 and serine 144. A Phosphothreonine modification is found at threonine 151.

Belongs to the PHLDA2 family. Expressed in placenta and adult prostate gland. In placenta, it is present in all cells of the villous cytotrophoblast. The protein is absent in cells from hydatidiform moles. Hydatidiform mole is a gestation characterized by abnormal development of both fetus and trophoblast. The majority of hydatidiform moles are associated with an excess of paternal to maternal genomes and are likely to result from the abnormal expression of imprinted genes (at protein level). Expressed at low levels in adult liver and lung, and fetal liver. Expressed in adult brain and neuroblastoma, medullablastoma and glioblastoma cell lines.

The protein localises to the cytoplasm. Its subcellular location is the membrane. In terms of biological role, plays a role in regulating placenta growth. May act via its PH domain that competes with other PH domain-containing proteins, thereby preventing their binding to membrane lipids. This is Pleckstrin homology-like domain family A member 2 (PHLDA2) from Homo sapiens (Human).